We begin with the raw amino-acid sequence, 236 residues long: Uridylate kinase (236 aa).

12 to 15 is an ATP binding site; the sequence is KISG. Residues 20 to 25 form an involved in allosteric activation by GTP region; the sequence is GKKGFG. UMP is bound at residue Gly-54. Positions 55 and 59 each coordinate ATP. UMP-binding positions include Asp-72 and 133–140; that span reads TGNPYFST. ATP-binding residues include Tyr-166 and Asp-169.

This sequence belongs to the UMP kinase family. In terms of assembly, homohexamer.

It is found in the cytoplasm. The enzyme catalyses UMP + ATP = UDP + ADP. It functions in the pathway pyrimidine metabolism; CTP biosynthesis via de novo pathway; UDP from UMP (UMPK route): step 1/1. With respect to regulation, allosterically activated by GTP. Inhibited by UTP. Its function is as follows. Catalyzes the reversible phosphorylation of UMP to UDP. In Clostridium novyi (strain NT), this protein is Uridylate kinase.